A 458-amino-acid polypeptide reads, in one-letter code: MTAEEMKVAENGAQSAPLPLEGVDISPKQDEGVLKVIKREGTGTETAMIGDRVFVHYTGWLLDGTKFDSSLDRKDKFSFDLGKGEVIKAWDIAVATMKVGEVCHITCKPEYAYGSAGSPPKIPPNATLVFEVELFEFKGEDLTEDEDGGIIRRIRTRGEGYARPNDGAMVEVALEGYYNDRLFDQRELCFEVGEGESLDLPCGLEEAIQRMEKGEHSIVYLKPSYAFGSVGKERFQIPPHAELRYEVHLKSFEKAKASWEMNSEEKLEQSNIVKERGTVYFKEGKYKQALLQYKKIVSWLEYESSFSGEEMQKVHALRLASHLNLAMCHLKLQAFSAAIESCNKALELDSNNEKGLFRRGEAHLAVNDFDLARADFQKVLQLYPSNKAAKTQLAVCQQRTRRQLAREKKLYANMFERLAEEEHKAKTEVAAGDHPTDAEMKGEPNNVAGNQAQVKTEA.

Position 1 is an N-acetylmethionine; in peptidyl-prolyl cis-trans isomerase FKBP4; alternate (M1). T2 carries the post-translational modification N-acetylthreonine; in peptidyl-prolyl cis-trans isomerase FKBP4, N-terminally processed; partial. One can recognise a PPIase FKBP-type 1 domain in the interval 50–138 (GDRVFVHYTG…VFEVELFEFK (89 aa)). The residue at position 143 (T143) is a Phosphothreonine; by CK2. The PPIase FKBP-type 2 domain maps to 167–253 (GAMVEVALEG…RYEVHLKSFE (87 aa)). At Y220 the chain carries Phosphotyrosine. The interval 267–400 (LEQSNIVKER…TQLAVCQQRT (134 aa)) is interaction with tubulin. TPR repeat units follow at residues 270-303 (SNIV…LEYE), 319-352 (LASH…DSNN), and 353-386 (EKGL…YPSN). Position 282 is an N6-acetyllysine (K282). Omega-N-methylarginine is present on R373. The disordered stretch occupies residues 423 to 458 (HKAKTEVAAGDHPTDAEMKGEPNNVAGNQAQVKTEA). A Phosphothreonine modification is found at T436. K441 participates in a covalent cross-link: Glycyl lysine isopeptide (Lys-Gly) (interchain with G-Cter in SUMO1). Residues 447-458 (VAGNQAQVKTEA) are compositionally biased toward polar residues.

As to quaternary structure, homodimer. Interacts with GLMN. Associates with HSP90AA1 and HSP70 in steroid hormone receptor complexes. Also interacts with peroxisomal phytanoyl-CoA alpha-hydroxylase (PHYH). Interacts with NR3C1 and dynein. Interacts with HSF1 in the HSP90 complex. Associates with tubulin. Interacts with MAPT/TAU. Interacts (via TPR domain) with S100A1, S100A2 and S100A6; the interaction is Ca(2+) dependent. Interaction with S100A1 and S100A2 (but not with S100A6) leads to inhibition of FKBP4-HSP90 interaction. Interacts with dynein; causes partially NR3C1 transport to the nucleus. In terms of processing, phosphorylation by CK2 results in loss of HSP90 binding activity. Widely detected in the brain (at protein level).

The protein resides in the cytoplasm. It is found in the cytosol. Its subcellular location is the mitochondrion. The protein localises to the nucleus. It localises to the cytoskeleton. The protein resides in the cell projection. It is found in the axon. It carries out the reaction [protein]-peptidylproline (omega=180) = [protein]-peptidylproline (omega=0). With respect to regulation, inhibited by FK506. In terms of biological role, immunophilin protein with PPIase and co-chaperone activities. Component of unligated steroid receptors heterocomplexes through interaction with heat-shock protein 90 (HSP90). Plays a role in the intracellular trafficking of heterooligomeric forms of steroid hormone receptors between cytoplasm and nuclear compartments. May have a protective role against oxidative stress in mitochondria. Also acts as a regulator of microtubule dynamics by inhibiting MAPT/TAU ability to promote microtubule assembly. The PPIase activity controls neuronal growth cones via regulation of TRPC1 channel opening. This Rattus norvegicus (Rat) protein is Peptidyl-prolyl cis-trans isomerase FKBP4 (Fkbp4).